The sequence spans 785 residues: Penicillin-binding protein 1A (785 aa).

The interval 1–61 is disordered; sequence MPPDDRLTAV…SGPGGPSGPG (61 aa). Residues 33-45 show a composition bias toward pro residues; the sequence is SPPPKPPPPPPPG. A compositionally biased stretch (gly residues) spans 46–59; that stretch reads RGGGGPSGPGGPSG. A helical membrane pass occupies residues 77–97; it reads IAVAVMVLLPLITFGMAYMIV. The tract at residues 118 to 299 is transglycosylase; it reads GSEIARIVPP…RWNWVLDGMV (182 aa). Glutamate 151 serves as the catalytic Proton donor; for transglycosylase activity. The transpeptidase stretch occupies residues 392 to 662; that stretch reads AVVSIDPRTG…EGVKPLVNKW (271 aa). Serine 426 (acyl-ester intermediate; for transpeptidase activity) is an active-site residue. Disordered regions lie at residues 605–626, 690–726, and 738–785; these read SRGH…VQLG, ESFP…QPSV, and GITI…PPPP. Composition is skewed to pro residues over residues 708 to 721 and 743 to 758; these read PAAP…PTDP and IGPP…PGAP. The span at 759–775 shows a compositional bias: low complexity; it reads GAPVGPGAPEVPVAPGA.

The protein resides in the cell membrane. It carries out the reaction [GlcNAc-(1-&gt;4)-Mur2Ac(oyl-L-Ala-gamma-D-Glu-L-Lys-D-Ala-D-Ala)](n)-di-trans,octa-cis-undecaprenyl diphosphate + beta-D-GlcNAc-(1-&gt;4)-Mur2Ac(oyl-L-Ala-gamma-D-Glu-L-Lys-D-Ala-D-Ala)-di-trans,octa-cis-undecaprenyl diphosphate = [GlcNAc-(1-&gt;4)-Mur2Ac(oyl-L-Ala-gamma-D-Glu-L-Lys-D-Ala-D-Ala)](n+1)-di-trans,octa-cis-undecaprenyl diphosphate + di-trans,octa-cis-undecaprenyl diphosphate + H(+). It catalyses the reaction Preferential cleavage: (Ac)2-L-Lys-D-Ala-|-D-Ala. Also transpeptidation of peptidyl-alanyl moieties that are N-acyl substituents of D-alanine.. It participates in cell wall biogenesis; peptidoglycan biosynthesis. Functionally, cell wall formation. Synthesis of cross-linked peptidoglycan from the lipid intermediates. The enzyme has a penicillin-insensitive transglycosylase N-terminal domain (formation of linear glycan strands) and a penicillin-sensitive transpeptidase C-terminal domain (cross-linking of the peptide subunits). In Mycolicibacterium smegmatis (strain ATCC 700084 / mc(2)155) (Mycobacterium smegmatis), this protein is Penicillin-binding protein 1A (ponA1).